Reading from the N-terminus, the 184-residue chain is ATP synthase subunit b, chloroplastic (184 aa).

A helical transmembrane segment spans residues 27–49 (LATNPINLSVVFGVLIFFGKGVL).

The protein belongs to the ATPase B chain family. In terms of assembly, F-type ATPases have 2 components, F(1) - the catalytic core - and F(0) - the membrane proton channel. F(1) has five subunits: alpha(3), beta(3), gamma(1), delta(1), epsilon(1). F(0) has four main subunits: a(1), b(1), b'(1) and c(10-14). The alpha and beta chains form an alternating ring which encloses part of the gamma chain. F(1) is attached to F(0) by a central stalk formed by the gamma and epsilon chains, while a peripheral stalk is formed by the delta, b and b' chains.

It is found in the plastid. It localises to the chloroplast thylakoid membrane. In terms of biological role, f(1)F(0) ATP synthase produces ATP from ADP in the presence of a proton or sodium gradient. F-type ATPases consist of two structural domains, F(1) containing the extramembraneous catalytic core and F(0) containing the membrane proton channel, linked together by a central stalk and a peripheral stalk. During catalysis, ATP synthesis in the catalytic domain of F(1) is coupled via a rotary mechanism of the central stalk subunits to proton translocation. Component of the F(0) channel, it forms part of the peripheral stalk, linking F(1) to F(0). In Nasturtium officinale (Watercress), this protein is ATP synthase subunit b, chloroplastic.